The primary structure comprises 384 residues: MSGCDSICAATAPPHVRAIAPYQPGKPISELARELGLAEADIVKLASNENPLGPSPFALAAAQDALLDMALYPDGAGYALKAKLSARLGVDAAQIVLGNGSNDVLDMVARAYLAPGTSAVYAQYAFAVYPIATHTVGAHGIAVAARDFGHDLERMRAAIRDDTRVVWIANPNNPTGTFLPWNEIEAFLETVPPRVLVVLDEAYGEYLAPASRCDTAAWVVRFPNLLISRTFSKAYGLAGLRVGYGIGHADVVDLLNRVRHPFNVNASALAAAEAALDDDAFLARSYALNAAGMQQLLGGLAALDIETVPSKGNFVLARVGDAARINTELLKRGVIVRPVAAYGLPEFLRVSVGLAGQNARFLDALGEVLAAAPGRHPDSRKALP.

An N6-(pyridoxal phosphate)lysine modification is found at lysine 233.

This sequence belongs to the class-II pyridoxal-phosphate-dependent aminotransferase family. Histidinol-phosphate aminotransferase subfamily. As to quaternary structure, homodimer. Requires pyridoxal 5'-phosphate as cofactor.

It catalyses the reaction L-histidinol phosphate + 2-oxoglutarate = 3-(imidazol-4-yl)-2-oxopropyl phosphate + L-glutamate. It functions in the pathway amino-acid biosynthesis; L-histidine biosynthesis; L-histidine from 5-phospho-alpha-D-ribose 1-diphosphate: step 7/9. The sequence is that of Histidinol-phosphate aminotransferase 1 from Thiobacillus denitrificans (strain ATCC 25259 / T1).